Reading from the N-terminus, the 147-residue chain is Methylglyoxal synthase (147 aa).

Residues 1 to 147 (MKGQRNIGMV…TPYVKRLGAK (147 aa)) form the MGS-like domain. Residues H12, K16, 38-41 (TGTT), and 59-60 (SG) contribute to the substrate site. The active-site Proton donor/acceptor is the D65. H92 provides a ligand contact to substrate.

It belongs to the methylglyoxal synthase family.

It carries out the reaction dihydroxyacetone phosphate = methylglyoxal + phosphate. Catalyzes the formation of methylglyoxal from dihydroxyacetone phosphate. The sequence is that of Methylglyoxal synthase from Oleidesulfovibrio alaskensis (strain ATCC BAA-1058 / DSM 17464 / G20) (Desulfovibrio alaskensis).